The sequence spans 89 residues: Large ribosomal subunit protein bL27 (89 aa).

Residues 1 to 26 (MAHKKAGGSSRNGRDSAGQRRGVKRF) are disordered.

It belongs to the bacterial ribosomal protein bL27 family.

This Nitratidesulfovibrio vulgaris (strain DSM 19637 / Miyazaki F) (Desulfovibrio vulgaris) protein is Large ribosomal subunit protein bL27.